We begin with the raw amino-acid sequence, 123 residues long: Fluoride-specific ion channel FluC (123 aa).

4 consecutive transmembrane segments (helical) span residues 7-27, 39-59, 67-87, and 100-120; these read LLLI…SGIL, LVNS…FFGF, IFLG…SYET, and FMNV…GFIL. Na(+) contacts are provided by glycine 75 and serine 78.

It belongs to the fluoride channel Fluc/FEX (TC 1.A.43) family.

It localises to the cell membrane. The enzyme catalyses fluoride(in) = fluoride(out). Na(+) is not transported, but it plays an essential structural role and its presence is essential for fluoride channel function. Fluoride-specific ion channel. Important for reducing fluoride concentration in the cell, thus reducing its toxicity. This is Fluoride-specific ion channel FluC from Pyrococcus abyssi (strain GE5 / Orsay).